The chain runs to 1203 residues: DNA-directed RNA polymerase subunit beta (1203 aa).

The tract at residues 1167 to 1203 (LSKYAQQQEEQRKAAAQTDESKTAPATKNESQPNTQD) is disordered. The segment covering 1190–1203 (APATKNESQPNTQD) has biased composition (polar residues).

This sequence belongs to the RNA polymerase beta chain family. The RNAP catalytic core consists of 2 alpha, 1 beta, 1 beta' and 1 omega subunit. When a sigma factor is associated with the core the holoenzyme is formed, which can initiate transcription.

It catalyses the reaction RNA(n) + a ribonucleoside 5'-triphosphate = RNA(n+1) + diphosphate. In terms of biological role, DNA-dependent RNA polymerase catalyzes the transcription of DNA into RNA using the four ribonucleoside triphosphates as substrates. In Levilactobacillus brevis (strain ATCC 367 / BCRC 12310 / CIP 105137 / JCM 1170 / LMG 11437 / NCIMB 947 / NCTC 947) (Lactobacillus brevis), this protein is DNA-directed RNA polymerase subunit beta.